Reading from the N-terminus, the 710-residue chain is MGKTKSRGRRAEKKSKKNEPEFNEDVSNLDSDATFANHESSSTSGIPNTFFGLVDNNELDYFKQAESTLNINAFESEEERQGFINSVLEEAQGKELKLVTNQICSKLMERLILFANYNQLKKIFKQFQNHFVSLAFHKYASHVLETLLVRSAALIEKELTQTDEEQLQLQEEKEEEDKDSINDVPMEDLFISMLNEFKPHLTTMIDHSYASHVLRLLILILAGKELPSSITSNSTLRSKKSKIARKMIEIKDNEDFDRAFQTPQSFKNELRAYCQTIIAGLDTKSARELSIHKIGSPVLQLLIQVEGLVDRERSFWHLIFAKDSEGKDSVEESFVEYLLSDSVGSHFLESIIKNDGARPKYIERLYKLYMKDRVLKLAKRSTTGVYIIQALLFKLKPVEVEYILDQIIPELAELISIADNQNLDLANKLIDASISRGNYRRDEIINQLFIKFAPNYDIENPSDNTSTEFIENILQLTGSTLGNTRDDWPTAEERKRALFLEKLMEYDYKFVICTWFNFMALPIERFVQMCFHGVFCHVVEKALIVEPEEPKTIQILRKRLLNIFQSQIVGLACNSYGSHIVDTLWNFTVLLPMYKDRIASELLSESHKVKESTYGRLVWKNWGMELFVRKKYDWKALIKQQEQEYYGETEDSTEKRAKKPIELKMERLAEEKRRQEEMAERAQSGYTKRKLEEATGTGSEKKQKLRGRRR.

The span at 1 to 16 (MGKTKSRGRRAEKKSK) shows a compositional bias: basic residues. The disordered stretch occupies residues 1–43 (MGKTKSRGRRAEKKSKKNEPEFNEDVSNLDSDATFANHESSST). Pumilio repeat units lie at residues 90 to 125 (EAQGKELKLVTNQICSKLMERLILFANYNQLKKIFK), 126 to 161 (QFQNHFVSLAFHKYASHVLETLLVRSAALIEKELTQ), 196 to 232 (EFKPHLTTMIDHSYASHVLRLLILILAGKELPSSITS), 280 to 321 (GLDT…LIFA), 329 to 367 (SVEESFVEYLLSDSVGSHFLESIIKNDGARPKYIERLYK), 369 to 405 (YMKDRVLKLAKRSTTGVYIIQALLFKLKPVEVEYILD), 520 to 557 (ALPIERFVQMCFHGVFCHVVEKALIVEPEEPKTIQILR), and 562 to 600 (NIFQSQIVGLACNSYGSHIVDTLWNFTVLLPMYKDRIAS). Positions 648 to 710 (ETEDSTEKRA…KKQKLRGRRR (63 aa)) are disordered. A compositionally biased stretch (basic and acidic residues) spans 652 to 680 (STEKRAKKPIELKMERLAEEKRRQEEMAE).

This sequence belongs to the NOP9 family.

The protein localises to the nucleus. It localises to the nucleolus. Functionally, RNA-binding nucleolar protein required for pre-rRNA processing. Involved in production of 18S rRNA and assembly of small ribosomal subunit. The protein is Nucleolar protein 9 (NOP9) of Candida dubliniensis (strain CD36 / ATCC MYA-646 / CBS 7987 / NCPF 3949 / NRRL Y-17841) (Yeast).